The sequence spans 384 residues: Sphingosine 1-phosphate receptor 4 (384 aa).

At Met-1–Arg-50 the chain is on the extracellular side. N-linked (GlcNAc...) asparagine glycosylation is found at Asn-2 and Asn-30. The helical transmembrane segment at Gly-51–Ile-71 threads the bilayer. Topologically, residues Thr-72–Cys-84 are cytoplasmic. The helical transmembrane segment at Leu-85–Leu-105 threads the bilayer. Residues Ser-106–Gln-117 lie on the Extracellular side of the membrane. Residues Trp-118 to Phe-138 form a helical membrane-spanning segment. The Cytoplasmic portion of the chain corresponds to Thr-139–Arg-161. The helical transmembrane segment at Val-162–Leu-182 threads the bilayer. Residues Gly-183–Leu-206 are Extracellular-facing. Residues Phe-207–Phe-227 form a helical membrane-spanning segment. Topologically, residues Arg-228–Thr-252 are cytoplasmic. A helical membrane pass occupies residues Val-253–Ala-273. Topologically, residues Asp-274 to Gly-288 are extracellular. Residues Met-289–Phe-309 form a helical membrane-spanning segment. The Cytoplasmic portion of the chain corresponds to Arg-310–Ile-384. Cys-323 carries the S-palmitoyl cysteine lipid modification.

This sequence belongs to the G-protein coupled receptor 1 family. As to expression, specifically expressed in fetal and adult lymphoid and hematopoietic tissue as well as in lung. Considerable level of expression in adult and fetal spleen as well as adult peripheral leukocytes and lung. Lower expression in adult thymus, lymph node, bone marrow, and appendix as well as in fetal liver, thymus, and lung.

It is found in the cell membrane. In terms of biological role, receptor for the lysosphingolipid sphingosine 1-phosphate (S1P). S1P is a bioactive lysophospholipid that elicits diverse physiological effect on most types of cells and tissues. May be involved in cell migration processes that are specific for lymphocytes. This chain is Sphingosine 1-phosphate receptor 4 (S1PR4), found in Homo sapiens (Human).